Reading from the N-terminus, the 344-residue chain is Dihydroorotase (344 aa).

The Zn(2+) site is built by H13 and H15. Residues 15-17 (HVR) and N41 contribute to the substrate site. The Zn(2+) site is built by K99, H136, and H174. K99 carries the N6-carboxylysine modification. H136 lines the substrate pocket. L219 is a substrate binding site. Residue D247 coordinates Zn(2+). D247 is a catalytic residue. The substrate site is built by H251 and A263.

The protein belongs to the metallo-dependent hydrolases superfamily. DHOase family. Class II DHOase subfamily. Homodimer. The cofactor is Zn(2+).

It carries out the reaction (S)-dihydroorotate + H2O = N-carbamoyl-L-aspartate + H(+). It functions in the pathway pyrimidine metabolism; UMP biosynthesis via de novo pathway; (S)-dihydroorotate from bicarbonate: step 3/3. Its function is as follows. Catalyzes the reversible cyclization of carbamoyl aspartate to dihydroorotate. The protein is Dihydroorotase of Aromatoleum aromaticum (strain DSM 19018 / LMG 30748 / EbN1) (Azoarcus sp. (strain EbN1)).